Reading from the N-terminus, the 215-residue chain is Pyridoxine/pyridoxamine 5'-phosphate oxidase (215 aa).

Residues 9 to 12 (RRDY) and K69 contribute to the substrate site. FMN-binding positions include 64-69 (RVLLLK), 79-80 (FT), K86, and Q108. Residues Y126, R130, and S134 each coordinate substrate. FMN contacts are provided by residues 143-144 (QS) and W188. 194 to 196 (RLH) contacts substrate. R198 lines the FMN pocket.

This sequence belongs to the pyridoxamine 5'-phosphate oxidase family. As to quaternary structure, homodimer. It depends on FMN as a cofactor.

The catalysed reaction is pyridoxamine 5'-phosphate + O2 + H2O = pyridoxal 5'-phosphate + H2O2 + NH4(+). It carries out the reaction pyridoxine 5'-phosphate + O2 = pyridoxal 5'-phosphate + H2O2. Its pathway is cofactor metabolism; pyridoxal 5'-phosphate salvage; pyridoxal 5'-phosphate from pyridoxamine 5'-phosphate: step 1/1. It participates in cofactor metabolism; pyridoxal 5'-phosphate salvage; pyridoxal 5'-phosphate from pyridoxine 5'-phosphate: step 1/1. In terms of biological role, catalyzes the oxidation of either pyridoxine 5'-phosphate (PNP) or pyridoxamine 5'-phosphate (PMP) into pyridoxal 5'-phosphate (PLP). This Pseudomonas entomophila (strain L48) protein is Pyridoxine/pyridoxamine 5'-phosphate oxidase.